Here is a 184-residue protein sequence, read N- to C-terminus: Ras-related protein Rap1 (184 aa).

GTP is bound at residue 10 to 17 (GSGGVGKS). An Effector region motif is present at residues 32-40 (YDPTIEDSY). Residues 57-61 (DTAGT) and 116-119 (NKCD) contribute to the GTP site. A Cysteine methyl ester modification is found at Cys181. Residue Cys181 is the site of S-geranylgeranyl cysteine attachment. The propeptide at 182 to 184 (VLL) is removed in mature form.

Belongs to the small GTPase superfamily. Ras family.

It is found in the cell membrane. The enzyme catalyses GTP + H2O = GDP + phosphate + H(+). Its activity is regulated as follows. Alternates between an inactive form bound to GDP and an active form bound to GTP. Activated by a guanine nucleotide-exchange factor (GEF) and inactivated by a GTPase-activating protein (GAP). Functionally, ras proteins bind GDP/GTP and possess intrinsic GTPase activity. Plays a role in photoreceptor cell determination. The polypeptide is Ras-related protein Rap1 (Drosophila melanogaster (Fruit fly)).